The chain runs to 445 residues: Tubulin beta chain (445 aa).

8 residues coordinate GTP: glutamine 11, glutamate 69, serine 138, glycine 142, threonine 143, glycine 144, asparagine 204, and asparagine 226. Position 69 (glutamate 69) interacts with Mg(2+). The interval 426-445 (QDATAEEEGEFEEEEGDVEA) is disordered. Acidic residues predominate over residues 429–445 (TAEEEGEFEEEEGDVEA).

This sequence belongs to the tubulin family. In terms of assembly, dimer of alpha and beta chains. A typical microtubule is a hollow water-filled tube with an outer diameter of 25 nm and an inner diameter of 15 nM. Alpha-beta heterodimers associate head-to-tail to form protofilaments running lengthwise along the microtubule wall with the beta-tubulin subunit facing the microtubule plus end conferring a structural polarity. Microtubules usually have 13 protofilaments but different protofilament numbers can be found in some organisms and specialized cells. Interacts with DCX/apicortin; the interaction stabilizes microtubule assembly. It depends on Mg(2+) as a cofactor.

The protein localises to the cytoplasm. The protein resides in the cytoskeleton. In terms of biological role, tubulin is the major constituent of microtubules, a cylinder consisting of laterally associated linear protofilaments composed of alpha- and beta-tubulin heterodimers. Microtubules grow by the addition of GTP-tubulin dimers to the microtubule end, where a stabilizing cap forms. Below the cap, tubulin dimers are in GDP-bound state, owing to GTPase activity of alpha-tubulin. This Plasmodium falciparum protein is Tubulin beta chain.